Consider the following 503-residue polypeptide: ATP synthase subunit alpha (503 aa).

G170–T177 provides a ligand contact to ATP.

This sequence belongs to the ATPase alpha/beta chains family. As to quaternary structure, F-type ATPases have 2 components, CF(1) - the catalytic core - and CF(0) - the membrane proton channel. CF(1) has five subunits: alpha(3), beta(3), gamma(1), delta(1), epsilon(1). CF(0) has three main subunits: a(1), b(2) and c(9-12). The alpha and beta chains form an alternating ring which encloses part of the gamma chain. CF(1) is attached to CF(0) by a central stalk formed by the gamma and epsilon chains, while a peripheral stalk is formed by the delta and b chains.

It is found in the cell inner membrane. It catalyses the reaction ATP + H2O + 4 H(+)(in) = ADP + phosphate + 5 H(+)(out). Its function is as follows. Produces ATP from ADP in the presence of a proton gradient across the membrane. The alpha chain is a regulatory subunit. The chain is ATP synthase subunit alpha from Thermotoga maritima (strain ATCC 43589 / DSM 3109 / JCM 10099 / NBRC 100826 / MSB8).